Reading from the N-terminus, the 178-residue chain is Caveolin-1 (178 aa).

S2 carries the N-acetylserine modification. S2 carries the phosphoserine modification. The interval 2–94 (SGGKYVDSEG…WKASFTTFTV (93 aa)) is required for homooligomerization. Topologically, residues 2–104 (SGGKYVDSEG…TKYWFYRLLS (103 aa)) are cytoplasmic. An N6-acetyllysine; alternate modification is found at K5. Residue K5 forms a Glycyl lysine isopeptide (Lys-Gly) (interchain with G-Cter in ubiquitin); alternate linkage. Position 6 is a phosphotyrosine (Y6). The residue at position 9 (S9) is a Phosphoserine. Y14 is subject to Phosphotyrosine; by ABL1. Y25 bears the Phosphotyrosine mark. Glycyl lysine isopeptide (Lys-Gly) (interchain with G-Cter in ubiquitin) cross-links involve residues K26, K30, K39, K47, and K57. An interaction with CAVIN3 region spans residues 82–94 (DGIWKASFTTFTV). An intramembrane region (helical) is located at residues 105-125 (ALFGIPMALIWGIYFAILSFL). Topologically, residues 126 to 178 (HIWAVVPCIKSFLIEIQCVSRVYSIYVHTFCDPFFEAVGKIFSSIRINMQKEI) are cytoplasmic. The interval 131–142 (VPCIKSFLIEIQ) is interacts with SPRY1, SPRY2, SPRY3 and SPRY4. S-palmitoyl cysteine attachment occurs at residues C133, C143, and C156. The interacts with SPRY1, SPRY2, and SPRY4 stretch occupies residues 149–160 (SIYVHTFCDPFF). The interval 167-178 (FSSIRINMQKEI) is interacts with SPRY1, SPRY2, SPRY3 and SPRY4.

Belongs to the caveolin family. Homooligomer. Interacts with GLIPR2. Interacts with NOSTRIN. Interacts with SNAP25 and STX1A. Interacts (via the N-terminus) with DPP4; the interaction is direct. Interacts with CTNNB1, CDH1 and JUP. Interacts with PACSIN2; this interaction induces membrane tubulation. Interacts with SLC7A9. Interacts with BMX and BTK. Interacts with TGFBR1. Interacts with CAVIN3 (via leucine-zipper domain) in a cholesterol-sensitive manner. Interacts with CAVIN1. Interacts with EHD2 in a cholesterol-dependent manner. Forms a ternary complex with UBXN6 and VCP; mediates CAV1 targeting to lysosomes for degradation. Interacts with ABCG1; this interaction regulates ABCG1-mediated cholesterol efflux. Interacts with NEU3; this interaction enhances NEU3 sialidase activity within caveola. Interacts (via C-terminus) with SPRY1, SPRY2 (via C-terminus), SPRY3, and SPRY4. Interacts with IGFBP5; this interaction allows trafficking of IGFBP5 from the plasma membrane to the nucleus. In terms of processing, phosphorylated at Tyr-14 by ABL1 in response to oxidative stress. Post-translationally, ubiquitinated. Undergo monoubiquitination and multi- and/or polyubiquitination. Monoubiquitination of N-terminal lysines promotes integration in a ternary complex with UBXN6 and VCP which promotes oligomeric CAV1 targeting to lysosomes for degradation. Ubiquitinated by ZNRF1; leading to degradation and modulation of the TLR4-mediated immune response.

The protein resides in the golgi apparatus membrane. Its subcellular location is the cell membrane. The protein localises to the membrane. It is found in the caveola. It localises to the membrane raft. May act as a scaffolding protein within caveolar membranes. Forms a stable heterooligomeric complex with CAV2 that targets to lipid rafts and drives caveolae formation. Mediates the recruitment of CAVIN proteins (CAVIN1/2/3/4) to the caveolae. Interacts directly with G-protein alpha subunits and can functionally regulate their activity. Involved in the costimulatory signal essential for T-cell receptor (TCR)-mediated T-cell activation. Its binding to DPP4 induces T-cell proliferation and NF-kappa-B activation in a T-cell receptor/CD3-dependent manner. Recruits CTNNB1 to caveolar membranes and may regulate CTNNB1-mediated signaling through the Wnt pathway. Negatively regulates TGFB1-mediated activation of SMAD2/3 by mediating the internalization of TGFBR1 from membrane rafts leading to its subsequent degradation. Binds 20(S)-hydroxycholesterol (20(S)-OHC). In Mustela putorius furo (European domestic ferret), this protein is Caveolin-1 (CAV1).